Here is a 360-residue protein sequence, read N- to C-terminus: Phenylalanine--tRNA ligase alpha subunit (360 aa).

Glutamate 260 contacts Mg(2+).

This sequence belongs to the class-II aminoacyl-tRNA synthetase family. Phe-tRNA synthetase alpha subunit type 1 subfamily. Tetramer of two alpha and two beta subunits. Requires Mg(2+) as cofactor.

Its subcellular location is the cytoplasm. It catalyses the reaction tRNA(Phe) + L-phenylalanine + ATP = L-phenylalanyl-tRNA(Phe) + AMP + diphosphate + H(+). The protein is Phenylalanine--tRNA ligase alpha subunit of Beijerinckia indica subsp. indica (strain ATCC 9039 / DSM 1715 / NCIMB 8712).